We begin with the raw amino-acid sequence, 814 residues long: DNA ligase (814 aa).

NAD(+)-binding positions include 46 to 50, 95 to 96, and Glu-129; these read DAEYD and SL. Residue Lys-131 is the N6-AMP-lysine intermediate of the active site. NAD(+)-binding residues include Arg-152, Glu-189, Lys-305, and Lys-329. Residues Cys-434, Cys-437, Cys-458, and Cys-464 each coordinate Zn(2+). Residues 525–548 are disordered; the sequence is LSAQRRSEGEPAPKKPTKKKGEEE. Positions 735-814 constitute a BRCT domain; that stretch reads TSAAAFAGKT…DDWLAMLAEA (80 aa).

It belongs to the NAD-dependent DNA ligase family. LigA subfamily. The cofactor is Mg(2+). Mn(2+) serves as cofactor.

It catalyses the reaction NAD(+) + (deoxyribonucleotide)n-3'-hydroxyl + 5'-phospho-(deoxyribonucleotide)m = (deoxyribonucleotide)n+m + AMP + beta-nicotinamide D-nucleotide.. DNA ligase that catalyzes the formation of phosphodiester linkages between 5'-phosphoryl and 3'-hydroxyl groups in double-stranded DNA using NAD as a coenzyme and as the energy source for the reaction. It is essential for DNA replication and repair of damaged DNA. The sequence is that of DNA ligase from Methylorubrum extorquens (strain PA1) (Methylobacterium extorquens).